The chain runs to 484 residues: uncharacterized protein (484 aa).

The region spanning 47–226 (TLPIPAAVVK…TEVTVKIFKF (180 aa)) is the FAD-binding PCMH-type domain.

It belongs to the FAD-binding oxidoreductase/transferase type 4 family.

This is an uncharacterized protein from Escherichia coli (strain K12).